The following is a 301-amino-acid chain: Zinc finger protein 346 (301 aa).

2 consecutive Matrin-type zinc fingers follow at residues 55-85 (SQCK…KVRR) and 117-141 (KACS…GKVH). Zn(2+)-binding residues include C57, C60, H73, H79, C119, C122, H135, and H141. Residues 151–177 (GSQTPALPQPEAQAKKDDGMQGPAEQD) are disordered. 2 Matrin-type zinc fingers span residues 180 to 210 (RFCS…HMNK) and 230 to 257 (YPCT…HKNH). Positions 250-283 (SGSKHKNHAKPKKGPNAFAPPPDNYQPDYQYPTN) are disordered. The segment covering 251–262 (GSKHKNHAKPKK) has biased composition (basic residues).

Its subcellular location is the nucleus. It is found in the cytoplasm. Binds preferentially to dsRNA, but also to RNA-DNA hybrids. This is Zinc finger protein 346 from Danio rerio (Zebrafish).